We begin with the raw amino-acid sequence, 2555 residues long: MPPLLAPLLCLALLPALAARGPRCSQPGETCLNGGKCEAANGTEACVCGGAFVGPRCQDPNPCLSTPCKNAGTCHVVDRRGVADYACSCALGFSGPLCLTPLDNACLTNPCRNGGTCDLLTLTEYKCRCPPGWSGKSCQQADPCASNPCANGGQCLPFEASYICHCPPSFHGPTCRQDVNECGQKPGLCRHGGTCHNEVGSYRCVCRATHTGPNCERPYVPCSPSPCQNGGTCRPTGDVTHECACLPGFTGQNCEENIDDCPGNNCKNGGACVDGVNTYNCRCPPEWTGQYCTEDVDECQLMPNACQNGGTCHNTHGGYNCVCVNGWTGEDCSENIDDCASAACFHGATCHDRVASFYCECPHGRTGLLCHLNDACISNPCNEGSNCDTNPVNGKAICTCPSGYTGPACSQDVDECSLGANPCEHAGKCINTLGSFECQCLQGYTGPRCEIDVNECVSNPCQNDATCLDQIGEFQCICMPGYEGVHCEVNTDECASSPCLHNGRCLDKINEFQCECPTGFTGHLCQYDVDECASTPCKNGAKCLDGPNTYTCVCTEGYTGTHCEVDIDECDPDPCHYGSCKDGVATFTCLCRPGYTGHHCETNINECSSQPCRHGGTCQDRDNAYLCFCLKGTTGPNCEINLDDCASSPCDSGTCLDKIDGYECACEPGYTGSMCNINIDECAGNPCHNGGTCEDGINGFTCRCPEGYHDPTCLSEVNECNSNPCVHGACRDSLNGYKCDCDPGWSGTNCDINNNECESNPCVNGGTCKDMTSGYVCTCREGFSGPNCQTNINECASNPCLNQGTCIDDVAGYKCNCLLPYTGATCEVVLAPCAPSPCRNGGECRQSEDYESFSCVCPTGWQGQTCEVDINECVLSPCRHGASCQNTHGGYRCHCQAGYSGRNCETDIDDCRPNPCHNGGSCTDGINTAFCDCLPGFRGTFCEEDINECASDPCRNGANCTDCVDSYTCTCPAGFSGIHCENNTPDCTESSCFNGGTCVDGINSFTCLCPPGFTGSYCQHDVNECDSQPCLHGGTCQDGCGSYRCTCPQGYTGPNCQNLVHWCDSSPCKNGGKCWQTHTQYRCECPSGWTGLYCDVPSVSCEVAAQRQGVDVARLCQHGGLCVDAGNTHHCRCQAGYTGSYCEDLVDECSPSPCQNGATCTDYLGGYSCKCVAGYHGVNCSEEIDECLSHPCQNGGTCLDLPNTYKCSCPRGTQGVHCEINVDDCNPPVDPVSRSPKCFNNGTCVDQVGGYSCTCPPGFVGERCEGDVNECLSNPCDARGTQNCVQRVNDFHCECRAGHTGRRCESVINGCKGKPCKNGGTCAVASNTARGFICKCPAGFEGATCENDARTCGSLRCLNGGTCISGPRSPTCLCLGPFTGPECQFPASSPCLGGNPCYNQGTCEPTSESPFYRCLCPAKFNGLLCHILDYSFGGGAGRDIPPPLIEEACELPECQEDAGNKVCSLQCNNHACGWDGGDCSLNFNDPWKNCTQSLQCWKYFSDGHCDSQCNSAGCLFDGFDCQRAEGQCNPLYDQYCKDHFSDGHCDQGCNSAECEWDGLDCAEHVPERLAAGTLVVVVLMPPEQLRNSSFHFLRELSRVLHTNVVFKRDAHGQQMIFPYYGREEELRKHPIKRAAEGWAAPDALLGQVKASLLPGGSEGGRRRRELDPMDVRGSIVYLEIDNRQCVQASSQCFQSATDVAAFLGALASLGSLNIPYKIEAVQSETVEPPPPAQLHFMYVAAAAFVLLFFVGCGVLLSRKRRRQHGQLWFPEGFKVSEASKKKRREPLGEDSVGLKPLKNASDGALMDDNQNEWGDEDLETKKFRFEEPVVLPDLDDQTDHRQWTQQHLDAADLRMSAMAPTPPQGEVDADCMDVNVRGPDGFTPLMIASCSGGGLETGNSEEEEDAPAVISDFIYQGASLHNQTDRTGETALHLAARYSRSDAAKRLLEASADANIQDNMGRTPLHAAVSADAQGVFQILIRNRATDLDARMHDGTTPLILAARLAVEGMLEDLINSHADVNAVDDLGKSALHWAAAVNNVDAAVVLLKNGANKDMQNNREETPLFLAAREGSYETAKVLLDHFANRDITDHMDRLPRDIAQERMHHDIVRLLDEYNLVRSPQLHGAPLGGTPTLSPPLCSPNGYLGSLKPGVQGKKVRKPSSKGLACGSKEAKDLKARRKKSQDGKGCLLDSSGMLSPVDSLESPHGYLSDVASPPLLPSPFQQSPSVPLNHLPGMPDTHLGIGHLNVAAKPEMAALGGGGRLAFETGPPRLSHLPVASGTSTVLGSSSGGALNFTVGGSTSLNGQCEWLSRLQSGMVPNQYNPLRGSVAPGPLSTQAPSLQHGMVGPLHSSLAASALSQMMSYQGLPSTRLATQPHLVQTQQVQPQNLQMQQQNLQPANIQQQQSLQPPPPPPQPHLGVSSAASGHLGRSFLSGEPSQADVQPLGPSSLAVHTILPQESPALPTSLPSSLVPPVTAAQFLTPPSQHSYSSPVDNTPSHQLQVPEHPFLTPSPESPDQWSSSSPHSNVSDWSEGVSSPPTSMQSQIARIPEAFK.

A signal peptide spans 1-18; the sequence is MPPLLAPLLCLALLPALA. Topologically, residues 19 to 1735 are extracellular; the sequence is ARGPRCSQPG…VEPPPPAQLH (1717 aa). EGF-like domains are found at residues 20–58, 59–99, 102–139, and 140–176; these read RGPR…PRCQ, DPNP…PLCL, LDNA…KSCQ, and QADP…PTCR. 33 disulfides stabilise this stretch: Cys-24/Cys-37, Cys-31/Cys-46, Cys-48/Cys-57, Cys-63/Cys-74, Cys-68/Cys-87, Cys-89/Cys-98, Cys-106/Cys-117, Cys-111/Cys-127, Cys-129/Cys-138, Cys-144/Cys-155, Cys-149/Cys-164, Cys-166/Cys-175, Cys-182/Cys-195, Cys-189/Cys-204, Cys-206/Cys-215, Cys-222/Cys-233, Cys-227/Cys-243, Cys-245/Cys-254, Cys-261/Cys-272, Cys-266/Cys-281, Cys-283/Cys-292, Cys-299/Cys-312, Cys-306/Cys-321, Cys-323/Cys-332, Cys-339/Cys-350, Cys-344/Cys-359, Cys-361/Cys-370, Cys-376/Cys-387, Cys-381/Cys-398, Cys-400/Cys-409, Cys-416/Cys-429, Cys-423/Cys-438, and Cys-440/Cys-449. N-linked (GlcNAc...) asparagine glycosylation is present at Asn-41. O-linked (Glc...) serine glycosylation is present at Ser-65. O-linked (Fuc...) threonine glycosylation is present at Thr-73. Thr-116 is a glycosylation site (O-linked (Fuc...) threonine). Ser-146 is a glycosylation site (O-linked (Glc...) serine). Positions 178-216 constitute an EGF-like 5; calcium-binding domain; sequence DVNECGQKPGLCRHGGTCHNEVGSYRCVCRATHTGPNCE. An O-linked (Fuc...) threonine glycan is attached at Thr-194. One can recognise an EGF-like 6 domain in the interval 218–255; it reads PYVPCSPSPCQNGGTCRPTGDVTHECACLPGFTGQNCE. An O-linked (Fuc...) threonine; alternate glycan is attached at Thr-232. Residue Thr-232 is glycosylated (O-linked (GalNAc...) threonine; alternate). An EGF-like 7; calcium-binding domain is found at 257 to 293; the sequence is NIDDCPGNNCKNGGACVDGVNTYNCRCPPEWTGQYCT. Residues 295–333 enclose the EGF-like 8; calcium-binding domain; the sequence is DVDECQLMPNACQNGGTCHNTHGGYNCVCVNGWTGEDCS. The O-linked (Fuc...) threonine glycan is linked to Thr-311. Residues 335-371 enclose the EGF-like 9; calcium-binding domain; it reads NIDDCASAACFHGATCHDRVASFYCECPHGRTGLLCH. Ser-341 is a glycosylation site (O-linked (Glc...) serine). Residue Thr-349 is glycosylated (O-linked (Fuc...) threonine). The region spanning 372–410 is the EGF-like 10 domain; sequence LNDACISNPCNEGSNCDTNPVNGKAICTCPSGYTGPACS. O-linked (Glc...) serine glycosylation occurs at Ser-378. Residues 412-450 enclose the EGF-like 11; calcium-binding domain; that stretch reads DVDECSLGANPCEHAGKCINTLGSFECQCLQGYTGPRCE. The tract at residues 420 to 421 is interaction with DLL4; it reads AN. The Ca(2+) site is built by Thr-432 and Ser-435. O-linked (Glc...) serine glycosylation is present at Ser-435. Positions 448-452 are interaction with DLL4; sequence RCEID. 3 residues coordinate Ca(2+): Asp-452, Val-453, and Glu-455. In terms of domain architecture, EGF-like 12; calcium-binding spans 452 to 488; that stretch reads DVNECVSNPCQNDATCLDQIGEFQCICMPGYEGVHCE. 3 disulfides stabilise this stretch: Cys-456/Cys-467, Cys-461/Cys-476, and Cys-478/Cys-487. Residue Ser-458 is glycosylated (O-linked (Glc...) serine). Residue Thr-466 is glycosylated (O-linked (Fuc...) threonine). Residues Asp-469 and Gln-470 each contribute to the Ca(2+) site. Asn-490, Thr-491, and Glu-493 together coordinate Ca(2+). In terms of domain architecture, EGF-like 13; calcium-binding spans 490–526; sequence NTDECASSPCLHNGRCLDKINEFQCECPTGFTGHLCQ. 74 disulfide bridges follow: Cys-494–Cys-505, Cys-499–Cys-514, Cys-516–Cys-525, Cys-532–Cys-543, Cys-537–Cys-552, Cys-554–Cys-563, Cys-570–Cys-580, Cys-575–Cys-589, Cys-591–Cys-600, Cys-607–Cys-618, Cys-612–Cys-627, Cys-629–Cys-638, Cys-645–Cys-655, Cys-650–Cys-664, Cys-666–Cys-675, Cys-682–Cys-693, Cys-687–Cys-702, Cys-704–Cys-713, Cys-720–Cys-730, Cys-725–Cys-739, Cys-741–Cys-750, Cys-757–Cys-768, Cys-762–Cys-777, Cys-779–Cys-788, Cys-795–Cys-806, Cys-800–Cys-815, Cys-817–Cys-826, Cys-833–Cys-844, Cys-838–Cys-855, Cys-857–Cys-866, Cys-873–Cys-884, Cys-878–Cys-893, Cys-895–Cys-904, Cys-911–Cys-922, Cys-916–Cys-931, Cys-933–Cys-942, Cys-949–Cys-960, Cys-954–Cys-969, Cys-971–Cys-980, Cys-987–Cys-998, Cys-992–Cys-1007, Cys-1009–Cys-1018, Cys-1025–Cys-1036, Cys-1030–Cys-1045, Cys-1047–Cys-1056, Cys-1063–Cys-1074, Cys-1068–Cys-1083, Cys-1085–Cys-1094, Cys-1101–Cys-1122, Cys-1116–Cys-1131, Cys-1133–Cys-1142, Cys-1149–Cys-1160, Cys-1154–Cys-1169, Cys-1171–Cys-1180, Cys-1187–Cys-1198, Cys-1192–Cys-1207, Cys-1209–Cys-1218, Cys-1238–Cys-1253, Cys-1255–Cys-1264, Cys-1271–Cys-1284, Cys-1276–Cys-1293, Cys-1295–Cys-1304, Cys-1311–Cys-1322, Cys-1316–Cys-1334, Cys-1336–Cys-1345, Cys-1352–Cys-1363, Cys-1357–Cys-1372, Cys-1374–Cys-1383, Cys-1391–Cys-1403, Cys-1397–Cys-1414, Cys-1416–Cys-1425, Cys-1449–Cys-1472, Cys-1454–Cys-1467, and Cys-1463–Cys-1479. Ser-496 carries O-linked (Glc...) serine glycosylation. 2 residues coordinate Ca(2+): Asp-507 and Lys-508. One can recognise an EGF-like 14; calcium-binding domain in the interval 528–564; that stretch reads DVDECASTPCKNGAKCLDGPNTYTCVCTEGYTGTHCE. O-linked (Glc...) serine glycosylation is present at Ser-534. The EGF-like 15; calcium-binding domain occupies 566 to 601; it reads DIDECDPDPCHYGSCKDGVATFTCLCRPGYTGHHCE. The 37-residue stretch at 603–639 folds into the EGF-like 16; calcium-binding domain; the sequence is NINECSSQPCRHGGTCQDRDNAYLCFCLKGTTGPNCE. O-linked (Glc...) serine glycosylation is present at Ser-609. Thr-617 carries an O-linked (Fuc...) threonine glycan. In terms of domain architecture, EGF-like 17; calcium-binding spans 641–676; the sequence is NLDDCASSPCDSGTCLDKIDGYECACEPGYTGSMCN. Ser-647 carries an O-linked (Glc...) serine glycan. One can recognise an EGF-like 18; calcium-binding domain in the interval 678 to 714; that stretch reads NIDECAGNPCHNGGTCEDGINGFTCRCPEGYHDPTCL. The O-linked (Fuc...) threonine glycan is linked to Thr-692. The EGF-like 19; calcium-binding domain occupies 716-751; sequence EVNECNSNPCVHGACRDSLNGYKCDCDPGWSGTNCD. Residue Ser-722 is glycosylated (O-linked (Glc...) serine). Residues 753–789 form the EGF-like 20 domain; the sequence is NNNECESNPCVNGGTCKDMTSGYVCTCREGFSGPNCQ. The O-linked (Glc...) serine glycan is linked to Ser-759. Thr-767 carries an O-linked (Fuc...) threonine glycan. O-linked (GlcNAc) serine glycosylation occurs at Ser-784. Positions 791 to 827 constitute an EGF-like 21; calcium-binding domain; that stretch reads NINECASNPCLNQGTCIDDVAGYKCNCLLPYTGATCE. The O-linked (Glc...) serine glycan is linked to Ser-797. The O-linked (Fuc...) threonine glycan is linked to Thr-805. Residues 829-867 enclose the EGF-like 22 domain; sequence VLAPCAPSPCRNGGECRQSEDYESFSCVCPTGWQGQTCE. The EGF-like 23; calcium-binding domain maps to 869–905; sequence DINECVLSPCRHGASCQNTHGGYRCHCQAGYSGRNCE. Positions 907-943 constitute an EGF-like 24 domain; sequence DIDDCRPNPCHNGGSCTDGINTAFCDCLPGFRGTFCE. Ser-921 carries an O-linked (Fuc) serine glycan. Positions 945 to 981 constitute an EGF-like 25; calcium-binding domain; sequence DINECASDPCRNGANCTDCVDSYTCTCPAGFSGIHCE. O-linked (Glc...) serine glycosylation is present at Ser-951. Asn-959 is a glycosylation site (N-linked (GlcNAc...) asparagine). EGF-like domains are found at residues 983 to 1019, 1021 to 1057, 1059 to 1095, 1097 to 1143, and 1145 to 1181; these read NTPD…SYCQ, DVNE…PNCQ, LVHW…LYCD, PSVS…SYCE, and LVDE…VNCS. O-linked (Fuc...) threonine glycosylation is present at Thr-997. An O-linked (Glc...) serine glycan is attached at Ser-1027. Thr-1035 is a glycosylation site (O-linked (Fuc...) threonine). Ser-1065 carries O-linked (Glc...) serine glycosylation. Residue Thr-1159 is glycosylated (O-linked (Fuc...) threonine). The N-linked (GlcNAc...) asparagine glycan is linked to Asn-1179. The region spanning 1183–1219 is the EGF-like 31; calcium-binding domain; the sequence is EIDECLSHPCQNGGTCLDLPNTYKCSCPRGTQGVHCE. Residue Ser-1189 is glycosylated (O-linked (Glc...) serine). The O-linked (Fuc...) threonine glycan is linked to Thr-1197. One can recognise an EGF-like 32; calcium-binding domain in the interval 1221–1265; it reads NVDDCNPPVDPVSRSPKCFNNGTCVDQVGGYSCTCPPGFVGERCE. N-linked (GlcNAc...) asparagine glycosylation occurs at Asn-1241. 4 EGF-like domains span residues 1267-1305, 1307-1346, 1348-1384, and 1387-1426; these read DVNE…RRCE, VING…ATCE, DART…PECQ, and ASSP…LLCH. Ser-1273 carries an O-linked (Glc...) serine glycan. A glycan (O-linked (Fuc...) threonine) is linked at Thr-1362. Thr-1379 carries an O-linked (GlcNAc...) threonine glycan. Residue Thr-1402 is glycosylated (O-linked (Fuc...) threonine; alternate). Thr-1402 carries an O-linked (GalNAc...) threonine; alternate glycan. LNR repeat units lie at residues 1449 to 1489, 1490 to 1531, and 1532 to 1571; these read CELP…PWKN, CTQS…CNPL, and YDQY…RLAA. Ca(2+) is bound by residues Asp-1457, Asn-1460, Asp-1475, and Asp-1478. A glycan (N-linked (GlcNAc...) asparagine) is linked at Asn-1489. 5 disulfides stabilise this stretch: Cys-1490–Cys-1514, Cys-1496–Cys-1509, Cys-1505–Cys-1521, Cys-1536–Cys-1549, and Cys-1545–Cys-1561. N-linked (GlcNAc...) asparagine glycosylation occurs at Asn-1587. Residue Thr-1725 is glycosylated (O-linked (GalNAc...) threonine). The tract at residues 1728–1760 is interaction with PSEN1; the sequence is PPPPAQLHFMYVAAAAFVLLFFVGCGVLLSRKR. The chain crosses the membrane as a helical span at residues 1736 to 1756; sequence FMYVAAAAFVLLFFVGCGVLL. Residues 1757–2555 are Cytoplasmic-facing; sequence SRKRRRQHGQ…QIARIPEAFK (799 aa). A Glycyl lysine isopeptide (Lys-Gly) (interchain with G-Cter in ubiquitin) cross-link involves residue Lys-1759. The segment at 1780 to 1808 is disordered; that stretch reads KKKRREPLGEDSVGLKPLKNASDGALMDD. At Thr-1861 the chain carries Phosphothreonine. 6 ANK repeats span residues 1927–1956, 1960–1990, 1994–2023, 2027–2056, 2060–2089, and 2095–2122; these read TGET…DANI, MGRT…DLDA, DGTT…DVNA, LGKS…NKDM, REET…NRDI, and RLPR…VRSP. Positions 1947–1955 are HIF1AN-binding; sequence LLEASADAN. Asn-1955 is modified ((3S)-3-hydroxyasparagine; by HIF1AN; partial). Positions 2014-2022 are HIF1AN-binding; the sequence is LINSHADVN. The residue at position 2022 (Asn-2022) is a (3S)-3-hydroxyasparagine; by HIF1AN. 3 disordered regions span residues 2151–2194, 2379–2447, and 2483–2555; these read PGVQ…LDSS, LVQT…QPLG, and TPPS…EAFK. Positions 2379–2408 are enriched in low complexity; it reads LVQTQQVQPQNLQMQQQNLQPANIQQQQSL. Polar residues predominate over residues 2483–2502; the sequence is TPPSQHSYSSPVDNTPSHQL. A compositionally biased stretch (low complexity) spans 2512–2527; the sequence is PSPESPDQWSSSSPHS. The segment covering 2528–2547 has biased composition (polar residues); that stretch reads NVSDWSEGVSSPPTSMQSQI.

This sequence belongs to the NOTCH family. In terms of assembly, heterodimer of a C-terminal fragment N(TM) and an N-terminal fragment N(EC) which are probably linked by disulfide bonds. Interacts with DNER, DTX1, DTX2 and RBPJ/RBPSUH. Also interacts with MAML1, MAML2 and MAML3 which act as transcriptional coactivators for NOTCH1. The NOTCH1 intracellular domain interacts with SNW1; the interaction involves multimerized NOTCH1 NICD and is implicated in a formation of an intermediate preactivation complex which associates with DNA-bound CBF-1/RBPJ. The activated membrane-bound form interacts with AAK1 which promotes NOTCH1 stabilization. Forms a trimeric complex with FBXW7 and SGK1. Interacts with HIF1AN. HIF1AN negatively regulates the function of notch intracellular domain (NICD), accelerating myogenic differentiation. Interacts (via NICD) with SNAI1 (via zinc fingers); the interaction induces SNAI1 degradation via MDM2-mediated ubiquitination and inhibits SNAI1-induced cell invasion. Interacts (via NICD) with MDM2A. Interacts (via NICD) with BCL6; the interaction decreases MAML1 recruitment by NOTCH1 NICD on target genes DNA and inhibits NOTCH1 transactivation activity. Interacts with THBS4. Interacts (via the EGF-like repeat region) with CCN3 (via CTCK domain). Interacts (via EGF-like domains) with DLL4 (via N-terminal DSL and MNNL domains). Interacts with ZMIZ1. Interacts (via NICD domain) with MEGF10 (via the cytoplasmic domain). Interacts with DLL1 and JAG1. Interacts (via NICD domain) with PRAG1. Forms a complex with PRAG1, N1ICD and MAML1, in a MAML1-dependent manner. Interacts (via transmembrane region) with PSEN1; the interaction is direct. Interacts with ZFP64. Synthesized in the endoplasmic reticulum as an inactive form which is proteolytically cleaved by a furin-like convertase in the trans-Golgi network before it reaches the plasma membrane to yield an active, ligand-accessible form. Cleavage results in a C-terminal fragment N(TM) and a N-terminal fragment N(EC). Following ligand binding, it is cleaved by ADAM17 to yield a membrane-associated intermediate fragment called notch extracellular truncation (NEXT). Following endocytosis, this fragment is then cleaved by one of the catalytic subunits of gamma-secretase (PSEN1 or PSEN2), to release a Notch-derived peptide containing the intracellular domain (NICD) from the membrane. In terms of processing, phosphorylated. Post-translationally, O-glycosylated on the EGF-like domains. O-glucosylated at Ser-435 by KDELC1 and KDELC2. Contains both O-linked fucose and O-linked glucose in the EGF-like domains 11, 12 and 13, which are interacting with the residues on DLL4. O-linked glycosylation by GALNT11 is involved in determination of left/right symmetry: glycosylation promotes activation of NOTCH1, possibly by promoting cleavage by ADAM17, modulating the balance between motile and immotile (sensory) cilia at the left-right organiser (LRO). MFNG-, RFNG- and LFNG-mediated modification of O-fucose residues at specific EGF-like domains results in inhibition of its activation by JAG1 and enhancement of its activation by DLL1 via an increased binding to DLL1. Ubiquitinated. Undergoes 'Lys-29'-linked polyubiquitination by ITCH; promotes the lysosomal degradation of non-activated internalized NOTCH1. Deubiquitination by USP12 is required for transport of internalized non-activated receptor from late endosomes to lysosomes for degradation. Monoubiquitination at Lys-1759 is required for activation by gamma-secretase cleavage, it promotes interaction with AAK1, which stabilizes it. Deubiquitination by EIF3F is necessary for nuclear import of activated Notch. In terms of processing, hydroxylated at Asn-1955 by HIF1AN. Hydroxylated at Asn-2022 by HIF1AN. Hydroxylation reduces affinity for HI1AN and may thus indirectly modulate negative regulation of NICD. In terms of tissue distribution, in fetal tissues most abundant in spleen, brain stem and lung. Also present in most adult tissues where it is found mainly in lymphoid tissues.

Its subcellular location is the cell membrane. It localises to the late endosome membrane. The protein resides in the nucleus. In terms of biological role, functions as a receptor for membrane-bound ligands Jagged-1 (JAG1), Jagged-2 (JAG2) and Delta-1 (DLL1) to regulate cell-fate determination. Upon ligand activation through the released notch intracellular domain (NICD) it forms a transcriptional activator complex with RBPJ/RBPSUH and activates genes of the enhancer of split locus. Affects the implementation of differentiation, proliferation and apoptotic programs. Involved in angiogenesis; negatively regulates endothelial cell proliferation and migration and angiogenic sprouting. Involved in the maturation of both CD4(+) and CD8(+) cells in the thymus. Important for follicular differentiation and possibly cell fate selection within the follicle. During cerebellar development, functions as a receptor for neuronal DNER and is involved in the differentiation of Bergmann glia. Represses neuronal and myogenic differentiation. May play an essential role in postimplantation development, probably in some aspect of cell specification and/or differentiation. May be involved in mesoderm development, somite formation and neurogenesis. May enhance HIF1A function by sequestering HIF1AN away from HIF1A. Required for the THBS4 function in regulating protective astrogenesis from the subventricular zone (SVZ) niche after injury. Involved in determination of left/right symmetry by modulating the balance between motile and immotile (sensory) cilia at the left-right organiser (LRO). The polypeptide is Neurogenic locus notch homolog protein 1 (NOTCH1) (Homo sapiens (Human)).